Reading from the N-terminus, the 1071-residue chain is DNA-directed RNA polymerase subunit beta (1071 aa).

Belongs to the RNA polymerase beta chain family. In terms of assembly, in plastids the minimal PEP RNA polymerase catalytic core is composed of four subunits: alpha, beta, beta', and beta''. When a (nuclear-encoded) sigma factor is associated with the core the holoenzyme is formed, which can initiate transcription.

It localises to the plastid. The protein resides in the chloroplast. The catalysed reaction is RNA(n) + a ribonucleoside 5'-triphosphate = RNA(n+1) + diphosphate. Its function is as follows. DNA-dependent RNA polymerase catalyzes the transcription of DNA into RNA using the four ribonucleoside triphosphates as substrates. This Drimys granadensis protein is DNA-directed RNA polymerase subunit beta.